Consider the following 235-residue polypeptide: Elongation factor Tu, chloroplastic (235 aa).

Residues 1 to 125 (KNMITGAAQM…SVDSYIPTPI (125 aa)) enclose the tr-type G domain. 47–50 (NKED) lines the GTP pocket.

It belongs to the TRAFAC class translation factor GTPase superfamily. Classic translation factor GTPase family. EF-Tu/EF-1A subfamily.

The protein resides in the plastid. It localises to the chloroplast. It carries out the reaction GTP + H2O = GDP + phosphate + H(+). Its function is as follows. GTP hydrolase that promotes the GTP-dependent binding of aminoacyl-tRNA to the A-site of ribosomes during protein biosynthesis. The chain is Elongation factor Tu, chloroplastic (tufA) from Costaria costata (Five-ribbed kelp).